A 121-amino-acid chain; its full sequence is uncharacterized protein (121 aa).

To E.coli YcjD and H.influenzae HI_1162.

This is an uncharacterized protein from Haemophilus influenzae (strain ATCC 51907 / DSM 11121 / KW20 / Rd).